Consider the following 316-residue polypeptide: HPr kinase/phosphorylase (316 aa).

Catalysis depends on residues His-146 and Lys-167. 161–168 serves as a coordination point for ATP; sequence GESGLGKS. Residue Ser-168 coordinates Mg(2+). Asp-185 acts as the Proton acceptor; for phosphorylation activity. Proton donor; for dephosphorylation activity in catalysis. The tract at residues 209-218 is important for the catalytic mechanism of both phosphorylation and dephosphorylation; it reads LEVRGIGLLD. Glu-210 lines the Mg(2+) pocket. Residue Arg-252 is part of the active site. Residues 273–278 are important for the catalytic mechanism of dephosphorylation; sequence QVEAGR.

The protein belongs to the HPrK/P family. Homohexamer. Requires Mg(2+) as cofactor.

It catalyses the reaction [HPr protein]-L-serine + ATP = [HPr protein]-O-phospho-L-serine + ADP + H(+). The catalysed reaction is [HPr protein]-O-phospho-L-serine + phosphate + H(+) = [HPr protein]-L-serine + diphosphate. Catalyzes the ATP- as well as the pyrophosphate-dependent phosphorylation of a specific serine residue in HPr, a phosphocarrier protein of the phosphoenolpyruvate-dependent sugar phosphotransferase system (PTS). HprK/P also catalyzes the pyrophosphate-producing, inorganic phosphate-dependent dephosphorylation (phosphorolysis) of seryl-phosphorylated HPr (P-Ser-HPr). This is HPr kinase/phosphorylase from Polaromonas naphthalenivorans (strain CJ2).